The following is a 283-amino-acid chain: Myeloid differentiation primary response protein MyD88-A (283 aa).

The region spanning R27–I105 is the Death domain. Residues E106 to G143 form an intermediate domain region. The TIR domain occupies E147–L281.

Its subcellular location is the cytoplasm. Its function is as follows. Adapter protein involved in the Toll-like receptor and IL-1 receptor signaling pathway in the innate immune response. Activates expression of target genes in the Spemann organizer region during early embryonic development. Is required for normal axis formation. The chain is Myeloid differentiation primary response protein MyD88-A (myd88-a) from Xenopus laevis (African clawed frog).